The sequence spans 918 residues: Protein translocase subunit SecA (918 aa).

Residues glutamine 87, glycine 105–threonine 109, and aspartate 516 contribute to the ATP site. Zn(2+) is bound by residues cysteine 902, cysteine 904, cysteine 913, and histidine 914.

The protein belongs to the SecA family. In terms of assembly, monomer and homodimer. Part of the essential Sec protein translocation apparatus which comprises SecA, SecYEG and auxiliary proteins SecDF-YajC and YidC. It depends on Zn(2+) as a cofactor.

The protein resides in the cell inner membrane. It is found in the cytoplasm. It carries out the reaction ATP + H2O + cellular proteinSide 1 = ADP + phosphate + cellular proteinSide 2.. In terms of biological role, part of the Sec protein translocase complex. Interacts with the SecYEG preprotein conducting channel. Has a central role in coupling the hydrolysis of ATP to the transfer of proteins into and across the cell membrane, serving both as a receptor for the preprotein-SecB complex and as an ATP-driven molecular motor driving the stepwise translocation of polypeptide chains across the membrane. This Methylibium petroleiphilum (strain ATCC BAA-1232 / LMG 22953 / PM1) protein is Protein translocase subunit SecA.